A 48-amino-acid polypeptide reads, in one-letter code: Large ribosomal subunit protein bL33B (48 aa).

It belongs to the bacterial ribosomal protein bL33 family.

The protein is Large ribosomal subunit protein bL33B of Streptococcus thermophilus (strain CNRZ 1066).